Reading from the N-terminus, the 271-residue chain is 3-methyl-2-oxobutanoate hydroxymethyltransferase (271 aa).

Residues Asp-51 and Asp-90 each coordinate Mg(2+). 3-methyl-2-oxobutanoate is bound by residues 51–52 (DS), Asp-90, and Lys-118. Glu-120 provides a ligand contact to Mg(2+). Glu-186 serves as the catalytic Proton acceptor.

The protein belongs to the PanB family. As to quaternary structure, homodecamer; pentamer of dimers. Mg(2+) is required as a cofactor.

It is found in the cytoplasm. It catalyses the reaction 3-methyl-2-oxobutanoate + (6R)-5,10-methylene-5,6,7,8-tetrahydrofolate + H2O = 2-dehydropantoate + (6S)-5,6,7,8-tetrahydrofolate. The protein operates within cofactor biosynthesis; (R)-pantothenate biosynthesis; (R)-pantoate from 3-methyl-2-oxobutanoate: step 1/2. In terms of biological role, catalyzes the reversible reaction in which hydroxymethyl group from 5,10-methylenetetrahydrofolate is transferred onto alpha-ketoisovalerate to form ketopantoate. In Stenotrophomonas maltophilia (strain R551-3), this protein is 3-methyl-2-oxobutanoate hydroxymethyltransferase.